A 350-amino-acid chain; its full sequence is Glycerol-1-phosphate dehydrogenase [NAD(P)+] (350 aa).

Residues 96 to 100 (GNIID) and 118 to 121 (TAPS) contribute to the NAD(+) site. Aspartate 123 serves as a coordination point for substrate. Serine 127 serves as a coordination point for NAD(+). Aspartate 170 contributes to the substrate binding site. Aspartate 170 and histidine 250 together coordinate Zn(2+). Histidine 254 provides a ligand contact to substrate. Zn(2+) is bound at residue histidine 266.

Belongs to the glycerol-1-phosphate dehydrogenase family. In terms of assembly, homodimer. The cofactor is Zn(2+).

The protein localises to the cytoplasm. The enzyme catalyses sn-glycerol 1-phosphate + NAD(+) = dihydroxyacetone phosphate + NADH + H(+). It catalyses the reaction sn-glycerol 1-phosphate + NADP(+) = dihydroxyacetone phosphate + NADPH + H(+). Its pathway is membrane lipid metabolism; glycerophospholipid metabolism. In terms of biological role, catalyzes the NAD(P)H-dependent reduction of dihydroxyacetonephosphate (DHAP or glycerone phosphate) to glycerol 1-phosphate (G1P). The G1P thus generated is used as the glycerophosphate backbone of phospholipids in the cellular membranes of Archaea. The chain is Glycerol-1-phosphate dehydrogenase [NAD(P)+] from Sulfurisphaera tokodaii (strain DSM 16993 / JCM 10545 / NBRC 100140 / 7) (Sulfolobus tokodaii).